Here is a 449-residue protein sequence, read N- to C-terminus: MFS acetylaranotin efflux transporter ataA (449 aa).

7 consecutive transmembrane segments (helical) span residues 6 to 26 (SVYVWLTVVVKDNTIIATAIP), 45 to 65 (YLLVTCMFQLIFGKLYGYFPI), 67 to 87 (WVFLAAIIIFEIGSAVCGAAP), 115 to 135 (FYINLPIGAVVIVVLLQFLHV), 155 to 175 (LGVVTFLPAIVCLLLALQWGG), 182 to 202 (NGRIIALFVLAGVLLIAFLAI), and 227 to 247 (LFMTLFAGAYFTIIYYLPIWF). The N-linked (GlcNAc...) asparagine glycan is linked to N252. 5 helical membrane passes run 260-280 (IMCLPLMLSMVIFSFVAGGGV), 287-307 (VPFFYIATVLAAAGAGLMTTF), 321-341 (VLLGSGVGMGIQLPIIAVQAV), 349-369 (VGTAILTFCQTFGGAIFVSVA), and 420-440 (ALVSAWYLAVALFSVAVLGAV).

Belongs to the major facilitator superfamily.

Its subcellular location is the cell membrane. In terms of biological role, efflux pump that may provide the dual role of acetylaranotin export and self-protection by allowing the fungus to evade the harmful effect of its own acetylaranotin production. The sequence is that of MFS acetylaranotin efflux transporter ataA from Aspergillus terreus (strain NIH 2624 / FGSC A1156).